A 371-amino-acid polypeptide reads, in one-letter code: Serpentine receptor class delta-1 (371 aa).

7 helical membrane-spanning segments follow: residues 31-51 (LSEV…YVIF), 62-82 (AVLL…SLLA), 109-129 (CFFC…ILLI), 148-168 (MIVI…FYFW), 209-229 (IPSL…YFII), 267-287 (AIPI…FGII), and 295-315 (ITFR…FIFI). The tract at residues 344–371 (EKFNQPPKQPTNPAQQSANNDAAKTEKV) is disordered. Residues 354–365 (TNPAQQSANNDA) show a composition bias toward polar residues.

This sequence belongs to the nematode receptor-like protein srd family.

It localises to the membrane. The protein is Serpentine receptor class delta-1 (srd-1) of Caenorhabditis elegans.